Here is a 2944-residue protein sequence, read N- to C-terminus: Collagen alpha-1(VII) chain (2944 aa).

An N-terminal signal peptide occupies residues 1–24 (MRLRLLVAALCAAEILMGAPEVWA). The segment at 18 to 1254 (GAPEVWAQPR…TGPCAVHCPK (1237 aa)) is nonhelical region (NC1). A VWFA 1 domain is found at 39–212 (DIVFLLDGSS…SILRTLLPLI (174 aa)). Fibronectin type-III domains are found at residues 235-330 (GPRD…TAKE), 331-417 (GLEL…TASS), 418-508 (VEQT…LEQL), 511-598 (PVMN…DPEA), 601-688 (VVPG…DPLG), 689-776 (PVRR…APEP), 779-867 (SVSK…PPAT), 870-957 (LLET…EPSH), and 959-1053 (PSTE…SHGP). N-linked (GlcNAc...) asparagine glycosylation occurs at Asn338. N-linked (GlcNAc...) asparagine glycosylation occurs at Asn787. The region spanning 1055 to 1230 (DVVFLLHATR…PGLDRAVSDL (176 aa)) is the VWFA 2 domain. Asn1110 carries an N-linked (GlcNAc...) asparagine glycan. Residues 1171–1173 (RGD) carry the Cell attachment site motif. Residues 1255–1475 (GQKGEPGVTG…GLRGAPGMTG (221 aa)) are interrupted collagenous region. The interval 1255–2775 (GQKGEPGVTG…GPRGEKGEAA (1521 aa)) is triple-helical region. 2 disordered regions span residues 1259–1934 (EPGV…GSLP) and 1960–2773 (SSGS…EKGE). Residues 1338-1352 (RGPQGPKGEPGEPGQ) are compositionally biased toward low complexity. Gly residues predominate over residues 1353 to 1363 (ITGGGGPGFPG). Composition is skewed to basic and acidic residues over residues 1397–1406 (KGDKGDRGER) and 1439–1448 (PGEKGEKGDC). The segment covering 1507 to 1518 (PGAAGHPGVEGP) has biased composition (low complexity). 3 stretches are compositionally biased toward basic and acidic residues: residues 1527–1536 (RRGEKGEPGR), 1627–1639 (RGRDGEAGEKGDE), and 1666–1680 (VGEKGDQGDPGEDGR). The segment covering 1813–1822 (PPGPPGPPGV) has biased composition (pro residues). 3 stretches are compositionally biased toward basic and acidic residues: residues 1846-1855 (EDGRKGEKGD), 1862-1871 (EGPDGPKGER), and 1968-1984 (PERRPGPKGDPGDRGPP). Residues 2002-2004 (RGD) carry the Cell attachment site motif. Positions 2040-2049 (GRAGGSGEAG) are enriched in gly residues. Over residues 2050 to 2068 (RPGERGERGEKGERGDQGR) the composition is skewed to basic and acidic residues. A Cell attachment site motif is present at residues 2063 to 2065 (RGD). A compositionally biased stretch (pro residues) spans 2074–2083 (LPGPPGPPGP). Positions 2130 to 2140 (DVGEPGKRGHD) are enriched in basic and acidic residues. Pro2158, Pro2167, Pro2176, and Pro2179 each carry 4-hydroxyproline. Composition is skewed to low complexity over residues 2182–2197 (PGLAGPAGPQGPSGLK), 2226–2241 (SGLVGPQGSPGLPGQV), 2279–2299 (PKGEPGPVGAPGQVVVGPPGA), and 2306–2317 (PGDLAGALLGEP). Over residues 2319 to 2335 (AKGDRGLPGPRGEKGEA) the composition is skewed to basic and acidic residues. The segment covering 2414-2427 (ERGLAGPPGREGAP) has biased composition (low complexity). Basic and acidic residues-rich tracts occupy residues 2462-2477 (RGERGEPGVRGEDGHP) and 2525-2544 (AKGDMGERGPRGIDGDKGPR). Residues 2576 to 2594 (PKGEPGAAGIPGEPGAPGK) are compositionally biased toward low complexity. The short motif at 2601–2603 (RGD) is the Cell attachment site element. Over residues 2615–2636 (LKGEKGIKGTCGRDGERGDKGE) the composition is skewed to basic and acidic residues. A 5-hydroxylysine mark is found at Lys2616 and Lys2622. The Cell attachment site motif lies at 2631 to 2633 (RGD). 3 positions are modified to 4-hydroxyproline: Pro2655, Pro2658, and Pro2664. Residues 2695 to 2704 (GPPGVGGFPG) are compositionally biased toward gly residues. The tract at residues 2776 to 2944 (LTEDDIRDFV…GVHSQKTGAA (169 aa)) is nonhelical region (NC2). In terms of domain architecture, BPTI/Kunitz inhibitor spans 2879-2931 (CSLPLDEGSCTAYTLRWYHRAVPGGTACHPFVYGGCGGNANRFGTREACERRC). 3 disulfide bridges follow: Cys2879–Cys2931, Cys2888–Cys2914, and Cys2906–Cys2927.

As to quaternary structure, homotrimer. Interacts with MIA3/TANGO1; facilitating its loading into transport carriers and subsequent secretion. In terms of processing, prolines at the third position of the tripeptide repeating unit (G-X-Y) are hydroxylated in some or all of the chains.

It is found in the secreted. It localises to the extracellular space. The protein localises to the extracellular matrix. The protein resides in the basement membrane. In terms of biological role, stratified squamous epithelial basement membrane protein that forms anchoring fibrils which may contribute to epithelial basement membrane organization and adherence by interacting with extracellular matrix (ECM) proteins such as type IV collagen. This chain is Collagen alpha-1(VII) chain, found in Mus musculus (Mouse).